A 452-amino-acid chain; its full sequence is Isocitrate dehydrogenase [NADP], mitochondrial (452 aa).

Residues 1 to 39 constitute a mitochondrion transit peptide; sequence MAGYLRVVRSLCRASGSRPAWAPAALTAPTSQEQTRRHY. N6-acetyllysine occurs at positions 45, 48, 67, and 69. 2 positions are modified to N6-acetyllysine; alternate: lysine 80 and lysine 106. An N6-succinyllysine; alternate mark is found at lysine 80 and lysine 106. NADP(+) is bound by residues 115 to 117 and arginine 122; that span reads TIT. Threonine 117 contributes to the substrate binding site. Residues 134–140 and arginine 149 each bind substrate; that span reads SPNGTIR. Lysine 155 is modified (N6-acetyllysine). Lysine 166 carries the post-translational modification N6-acetyllysine; alternate. Lysine 166 is subject to N6-succinyllysine; alternate. Position 172 (arginine 172) interacts with substrate. N6-acetyllysine; alternate occurs at positions 180 and 193. An N6-succinyllysine; alternate mark is found at lysine 180 and lysine 193. An N6-acetyllysine modification is found at lysine 199. Lysine 256 carries the N6-acetyllysine; alternate modification. Lysine 256 is modified (N6-succinyllysine; alternate). 4 positions are modified to N6-acetyllysine: lysine 263, lysine 272, lysine 275, and lysine 280. Lysine 282 bears the N6-acetyllysine; alternate mark. Lysine 282 is subject to N6-succinyllysine; alternate. Aspartate 291 lines the Mn(2+) pocket. Position 299 (lysine 299) interacts with NADP(+). Aspartate 314 provides a ligand contact to Mn(2+). NADP(+) is bound by residues 349-354 and asparagine 367; that span reads GTVTRH. At lysine 384 the chain carries N6-acetyllysine; alternate. Lysine 384 bears the N6-succinyllysine; alternate mark. An N6-acetyllysine mark is found at lysine 400, lysine 413, and lysine 442.

It belongs to the isocitrate and isopropylmalate dehydrogenases family. As to quaternary structure, homodimer. The cofactor is Mg(2+). It depends on Mn(2+) as a cofactor. Post-translationally, acetylation at Lys-413 dramatically reduces catalytic activity. Deacetylated by SIRT3.

Its subcellular location is the mitochondrion. It carries out the reaction D-threo-isocitrate + NADP(+) = 2-oxoglutarate + CO2 + NADPH. Plays a role in intermediary metabolism and energy production. It may tightly associate or interact with the pyruvate dehydrogenase complex. This is Isocitrate dehydrogenase [NADP], mitochondrial (IDH2) from Macaca fascicularis (Crab-eating macaque).